The sequence spans 71 residues: Large ribosomal subunit protein bL31 (71 aa).

Cysteine 16, cysteine 18, cysteine 37, and cysteine 40 together coordinate Zn(2+).

It belongs to the bacterial ribosomal protein bL31 family. Type A subfamily. Part of the 50S ribosomal subunit. The cofactor is Zn(2+).

Its function is as follows. Binds the 23S rRNA. The protein is Large ribosomal subunit protein bL31 of Aeromonas salmonicida (strain A449).